The primary structure comprises 580 residues: Negative elongation factor B (580 aa).

Position 519 is an N6-acetyllysine (Lys-519). Residues 548–580 are disordered; the sequence is LEQLDHRKPSPAQAAETPALELPLPSVPAPAPL. Ser-557 bears the Phosphoserine mark.

The protein belongs to the NELF-B family. The NELF complex is composed of NELFA, NELFB, NELFCD (isoform NELF-C or isoform NELF-D) and NELFE; the N-terminus of NELFB binds to the NELFA:NELFCD subcomplex. Binds RNA which may help to stabilize the NELF complex on nucleic acid. Interacts with the first BRCT repeat of BRCA1. Interacts with KIAA1191. Interacts with NELFE. Widely expressed. Expressed in heart, brain, lung, placenta, liver, skeletal muscle, kidney and pancreas.

It localises to the nucleus. Essential component of the NELF complex, a complex that negatively regulates the elongation of transcription by RNA polymerase II. The NELF complex, which acts via an association with the DSIF complex and causes transcriptional pausing, is counteracted by the P-TEFb kinase complex. May be able to induce chromatin unfolding. Essential for early embryogenesis; plays an important role in maintaining the undifferentiated state of embryonic stem cells (ESCs) by preventing unscheduled expression of developmental genes. Plays a key role in establishing the responsiveness of stem cells to developmental cues; facilitates plasticity and cell fate commitment in ESCs by establishing the appropriate expression level of signaling molecules. Supports the transcription of genes involved in energy metabolism in cardiomyocytes; facilitates the association of transcription initiation factors with the promoters of the metabolism-related genes. In terms of biological role, (Microbial infection) The NELF complex is involved in HIV-1 latency possibly involving recruitment of PCF11 to paused RNA polymerase II. In vitro, binds weakly to the HIV-1 TAR RNA which is located in the long terminal repeat (LTR) of HIV-1. In Homo sapiens (Human), this protein is Negative elongation factor B (NELFB).